The following is a 407-amino-acid chain: MTYPDDYSTDVQKNEMDLKEFKEKAYLAELESKVLRLELKNKDITRENVQIKKENEILKRELDKLRIPPLILGTVLDRVNERKAVVKSSTGPNFLVNLSQFVEPDDIVPGARVCLNQQTLAVVEVLPKEKDYRAMAMELEEKPDILFGDIGGLNNQIRDIKEVVELPLKNPELFEKVGIVPPKGVLLYGPPGTGKTLLAKAVARETNASFVRVVGSELVKKFIGEGAKLVRDVFKLAKEKSPCIIFIDEIDAVASKRTESLTGGDREVQRTLMQLLAEMDGFDSRGDVKIIAATNRPDILDPAILRPGRFDRIIEIAAPDEDGRLEIFKIHTDKMNIKSVDLREIAKMAENMVGADIKAVCTEAGMFAIREGREYVTTKDFKEALLKVTGKKEKSEEGIAHLTTMYG.

A coiled-coil region spans residues 22–67 (KEKAYLAELESKVLRLELKNKDITRENVQIKKENEILKRELDKLRI). Residues 192 to 197 (GTGKTL) and H331 each bind ATP. Residues 405–407 (MYG) form a docks into pockets in the proteasome alpha-ring to cause gate opening region.

Belongs to the AAA ATPase family. Homohexamer. The hexameric complex has a two-ring architecture resembling a top hat that caps the 20S proteasome core at one or both ends. Upon ATP-binding, the C-terminus of PAN interacts with the alpha-rings of the proteasome core by binding to the intersubunit pockets.

The protein resides in the cytoplasm. Its function is as follows. ATPase which is responsible for recognizing, binding, unfolding and translocation of substrate proteins into the archaeal 20S proteasome core particle. Is essential for opening the gate of the 20S proteasome via an interaction with its C-terminus, thereby allowing substrate entry and access to the site of proteolysis. Thus, the C-termini of the proteasomal ATPase function like a 'key in a lock' to induce gate opening and therefore regulate proteolysis. Unfolding activity requires energy from ATP hydrolysis, whereas ATP binding alone promotes ATPase-20S proteasome association which triggers gate opening, and supports translocation of unfolded substrates. The chain is Proteasome-activating nucleotidase from Methanococcus vannielii (strain ATCC 35089 / DSM 1224 / JCM 13029 / OCM 148 / SB).